The primary structure comprises 425 residues: CinA-like protein (425 aa).

The protein belongs to the CinA family.

This is CinA-like protein from Shewanella sp. (strain ANA-3).